The following is a 308-amino-acid chain: Solute carrier family 25 member 47 (308 aa).

Solcar repeat units follow at residues 1 to 80, 93 to 206, and 215 to 302; these read MDFV…CLAH, PTKA…LCEW, and PDVP…VLRL. A run of 6 helical transmembrane segments spans residues 3 to 23, 49 to 69, 98 to 116, 190 to 210, 217 to 237, and 273 to 293; these read FVAGAIGGVCGVAVGYPLDTV, VWGFYRGLSLPVCTVSLVSSV, ITLSGCASGLVRVFLTSPT, GHSFATYFLSYAVLCEWLSPA, VPGVLVAGGCAGVLAWAVATP, and VLFKGLVLNCCRAFPVNMVVF.

Belongs to the mitochondrial carrier (TC 2.A.29) family. Specifically expressed in liver.

It localises to the mitochondrion inner membrane. The protein resides in the mitochondrion outer membrane. It carries out the reaction NAD(+)(in) = NAD(+)(out). The catalysed reaction is acetyl-CoA(in) = acetyl-CoA(out). In terms of biological role, mitochondrial NAD(+) transporter that acts as a 'metabolic gate' in hepatic lipogenesis. Provides NAD(+) substrate to mitochondrial SIRT3 deacetylase and enables its NAD(+)-dependent activities in mitochondrial energy metabolism. This triggers downstream activation of PRKAA1/AMPK-alpha signaling cascade that negatively regulates sterol regulatory element-binding protein (SREBP) transcriptional activities and ATP-consuming lipogenesis to restore cellular energy balance. May transport other mitochondrial metabolites having an aromatic nucleotide and phosphate groups, such as acetyl-CoA. Does not transport amino acids. The transport mechanism remains to be elucidated. The sequence is that of Solute carrier family 25 member 47 from Homo sapiens (Human).